Here is a 345-residue protein sequence, read N- to C-terminus: Ferrochelatase (345 aa).

Fe cation is bound by residues His215 and Glu296.

Belongs to the ferrochelatase family.

Its subcellular location is the cytoplasm. The enzyme catalyses heme b + 2 H(+) = protoporphyrin IX + Fe(2+). It functions in the pathway porphyrin-containing compound metabolism; protoheme biosynthesis; protoheme from protoporphyrin-IX: step 1/1. Its function is as follows. Catalyzes the ferrous insertion into protoporphyrin IX. This is Ferrochelatase from Rhodopseudomonas palustris (strain HaA2).